Here is a 365-residue protein sequence, read N- to C-terminus: TD and POZ domain-containing protein 1-like (365 aa).

In terms of domain architecture, MATH spans 19 to 149 (KFCYKWTISN…EDQLTICCKV (131 aa)). A BTB domain is found at 188 to 255 (TDCCLLVAGH…IYTGKAPYLH (68 aa)).

The protein belongs to the Tdpoz family.

The sequence is that of TD and POZ domain-containing protein 1-like from Mus musculus (Mouse).